The chain runs to 536 residues: MTPSPHDLLHCGMNSQDRDETNGDRQRLVRVALGQEDGDLLVRGAQVVQPVTREVYAADVLVAGGRVAAVGPDLPARARRTVQARGAYLAPGFIDGHIHIESSLLTPASFAAAVLPHGTTAVVAEPHEIVNVLGPAGLNWMLGAGRTSGLRVYASAPSCVPASEFEQGGARVDAAQVAEMLARPGVLGLAEMMNYPGVLGGDAGVWDILNAGRRSGKRLDGHAAGLGGRELLAYAAAGLHSDHEATTPEEARERLRAGLWLMVREGSAARNLAALLPVLRDLPRRALLVSDDVSVDELLELGHLDRLLRTCVAGGLHPADAVALVTSQPAEYWGLHDLGVIAPGYHADFVLLRDLQHFGVLETFVGGEEARPGGETPPLPGGGVDLGPGWDGATFDPPAHWPTLQMFPDQIVTGRAAPGSGDARLVVADRYGRGEWSSCWTLGSGLRGGTLGISILHDAHQVALLGGSDADLRAAGRALERLGGGIVLVVDGEVREQLPLPYAGLMTDHAPAEAAAALGRVTAAARLLGCMPAGRL.

The disordered stretch occupies residues 1–24 (MTPSPHDLLHCGMNSQDRDETNGD).

Belongs to the metallo-dependent hydrolases superfamily. Adenine deaminase family. Mn(2+) is required as a cofactor.

The enzyme catalyses adenine + H2O + H(+) = hypoxanthine + NH4(+). The protein is Adenine deaminase of Deinococcus radiodurans (strain ATCC 13939 / DSM 20539 / JCM 16871 / CCUG 27074 / LMG 4051 / NBRC 15346 / NCIMB 9279 / VKM B-1422 / R1).